The sequence spans 292 residues: 2-(5''-triphosphoribosyl)-3'-dephosphocoenzyme-A synthase (292 aa).

Belongs to the CitG/MdcB family.

The enzyme catalyses 3'-dephospho-CoA + ATP = 2'-(5''-triphospho-alpha-D-ribosyl)-3'-dephospho-CoA + adenine. In terms of biological role, catalyzes the formation of 2-(5''-triphosphoribosyl)-3'-dephosphocoenzyme-A, the precursor of the prosthetic group of the holo-acyl carrier protein (gamma chain) of citrate lyase, from ATP and dephospho-CoA. This chain is 2-(5''-triphosphoribosyl)-3'-dephosphocoenzyme-A synthase, found in Escherichia coli (strain SMS-3-5 / SECEC).